A 530-amino-acid polypeptide reads, in one-letter code: Inactive ubiquitin carboxyl-terminal hydrolase 17-like protein 7 (530 aa).

Positions Ala80–Lys375 constitute a USP domain. The span at Ser382–Arg392 shows a compositional bias: basic and acidic residues. 3 disordered regions span residues Ser382–His412, Glu431–Lys454, and Ser490–Gln530. Polar residues predominate over residues Ser490–Thr512. Basic residues predominate over residues Arg513–Arg524.

It belongs to the peptidase C19 family. USP17 subfamily.

The protein resides in the nucleus. The protein localises to the endoplasmic reticulum. In Homo sapiens (Human), this protein is Inactive ubiquitin carboxyl-terminal hydrolase 17-like protein 7 (USP17L7).